The sequence spans 427 residues: UPF0415 protein C7orf25 homolog (427 aa).

Over residues Gly-200 to Thr-234 the composition is skewed to acidic residues. The disordered stretch occupies residues Gly-200–Leu-236.

This sequence belongs to the UPF0415 family.

This is UPF0415 protein C7orf25 homolog from Danio rerio (Zebrafish).